The primary structure comprises 343 residues: Protein RecA (343 aa).

Residue 66-73 (GPESSGKT) participates in ATP binding.

Belongs to the RecA family.

The protein resides in the cytoplasm. Functionally, can catalyze the hydrolysis of ATP in the presence of single-stranded DNA, the ATP-dependent uptake of single-stranded DNA by duplex DNA, and the ATP-dependent hybridization of homologous single-stranded DNAs. It interacts with LexA causing its activation and leading to its autocatalytic cleavage. This is Protein RecA from Rickettsia massiliae (strain Mtu5).